We begin with the raw amino-acid sequence, 403 residues long: PP2A regulatory subunit TAP46 (403 aa).

Disordered regions lie at residues 158-184 (ERRGRSTKAAALSSPVETEEDDVLDDD) and 351-403 (ANSS…TPCG). Acidic residues-rich tracts occupy residues 174–184 (ETEEDDVLDDD) and 366–375 (EDDEEDDDDA). Over residues 376–391 (AQDKARAWDDWKDDNP) the composition is skewed to basic and acidic residues.

The protein belongs to the IGBP1/TAP42 family.

Involved in the regulation of the TOR signaling pathway. Seems to act as a regulator of PP2A catalytic activity. This is PP2A regulatory subunit TAP46 from Nicotiana tabacum (Common tobacco).